Here is a 395-residue protein sequence, read N- to C-terminus: Elongation factor Tu (395 aa).

Positions 10-204 (KEHANIGTIG…AVDDFIPTPE (195 aa)) constitute a tr-type G domain. Residues 19–26 (GHVDHGKT) are G1. 19–26 (GHVDHGKT) lines the GTP pocket. T26 contacts Mg(2+). The G2 stretch occupies residues 60-64 (GITIN). Residues 81-84 (DCPG) are G3. GTP is bound by residues 81 to 85 (DCPGH) and 136 to 139 (NKVD). Positions 136-139 (NKVD) are G4. A G5 region spans residues 174–176 (SAL).

It belongs to the TRAFAC class translation factor GTPase superfamily. Classic translation factor GTPase family. EF-Tu/EF-1A subfamily. In terms of assembly, monomer.

It localises to the cytoplasm. It catalyses the reaction GTP + H2O = GDP + phosphate + H(+). Functionally, GTP hydrolase that promotes the GTP-dependent binding of aminoacyl-tRNA to the A-site of ribosomes during protein biosynthesis. The protein is Elongation factor Tu of Staphylococcus saprophyticus subsp. saprophyticus (strain ATCC 15305 / DSM 20229 / NCIMB 8711 / NCTC 7292 / S-41).